Here is a 570-residue protein sequence, read N- to C-terminus: Urease subunit alpha (570 aa).

The Urease domain occupies 131–570 (GGVDTHIHFI…LPMAQRYFLF (440 aa)). Ni(2+)-binding residues include H136, H138, and K219. K219 is modified (N6-carboxylysine). H221 is a binding site for substrate. H248 and H274 together coordinate Ni(2+). The active-site Proton donor is the H322. A Ni(2+)-binding site is contributed by D362.

The protein belongs to the metallo-dependent hydrolases superfamily. Urease alpha subunit family. In terms of assembly, heterotrimer of UreA (gamma), UreB (beta) and UreC (alpha) subunits. Three heterotrimers associate to form the active enzyme. It depends on Ni cation as a cofactor. In terms of processing, carboxylation allows a single lysine to coordinate two nickel ions.

The protein localises to the cytoplasm. It carries out the reaction urea + 2 H2O + H(+) = hydrogencarbonate + 2 NH4(+). It participates in nitrogen metabolism; urea degradation; CO(2) and NH(3) from urea (urease route): step 1/1. In Methylocella silvestris (strain DSM 15510 / CIP 108128 / LMG 27833 / NCIMB 13906 / BL2), this protein is Urease subunit alpha.